The sequence spans 337 residues: G-protein coupled receptor 65 (337 aa).

Residues 1–5 (MNSTC) lie on the Extracellular side of the membrane. The N-linked (GlcNAc...) asparagine glycan is linked to Asn-2. 2 cysteine pairs are disulfide-bonded: Cys-5-Cys-160 and Cys-87-Cys-170. Residues 6–42 (IEEQHDLDHYLFPIVYIFVIIVSIPANIGSLCVSFLQ) form a helical membrane-spanning segment. Residues 43-46 (AKKE) lie on the Cytoplasmic side of the membrane. Residues 47 to 77 (SELGIYLFSLSLSDLLYALTLPLWIDYTWNK) traverse the membrane as a helical segment. Residues 78 to 82 (DNWTF) are Extracellular-facing. Residue Asn-79 is glycosylated (N-linked (GlcNAc...) asparagine). The chain crosses the membrane as a helical span at residues 83 to 118 (SPALCKGSAFLMYMNFYSSTAFLTCIAVDRYLAVVY). Over 119–126 (PLKFFFLR) the chain is Cytoplasmic. A helical transmembrane segment spans residues 127–153 (TRRFALMVSLSIWILETIFNAVMLWED). At 154–174 (ETVVEYCDAEKSNFTLCYDKY) the chain is on the extracellular side. The extracellular loop 2 (ECL2) stretch occupies residues 154 to 174 (ETVVEYCDAEKSNFTLCYDKY). An N-linked (GlcNAc...) asparagine glycan is attached at Asn-166. The helical transmembrane segment at 175–212 (PLEKWQINLNLFRTCTGYAIPLVTILICNRKVYQAVRH) threads the bilayer. The Cytoplasmic segment spans residues 213 to 216 (NKAT). The helical transmembrane segment at 217–252 (ENKEKKRIIKLLVSITVTFVLCFTPFHVMLLIRCIL) threads the bilayer. At 253 to 264 (EHAVNFEDHSNS) the chain is on the extracellular side. Residues 265–293 (GKRTYTMYRITVALTSLNCVADPILYCFV) traverse the membrane as a helical segment. Topologically, residues 294-337 (TETGRYDMWNILKFCTGRCNTSQRQRKRILSVSTKDTMELEVLE) are cytoplasmic.

This sequence belongs to the G-protein coupled receptor 1 family. In terms of tissue distribution, predominantly expressed in thymus, spleen, lymph nodes, small intestine, lung, placenta and peripheral blood leukocytes.

Its subcellular location is the cell membrane. It is found in the early endosome membrane. The protein localises to the late endosome membrane. Activated by a network of residues that connects an extracellular-facing cavity to Glu-142, a conserved charged residue buried in the transmembrane core of the receptor. Protonation likely drives conformational changes in extracellular loop 2 (ECL2), which stabilizes movement of transmembrane 3 (TM3) and a series of rearrangements that connect the extracellular-facing cavity to Glu-142, a residue only conserved in proton-sensing G-protein coupled receptors. Activated by BTB09089, a positive allosteric modulator. Functionally, proton-sensing G-protein coupled receptor activated by extracellular pH, which is required to monitor pH changes and generate adaptive reactions. Activated by an optimal pH of 7.4. Ligand binding causes a conformation change that triggers signaling via guanine nucleotide-binding proteins (G proteins) and modulates the activity of downstream effectors, such as adenylate cyclase. GPR65 is mainly coupled to G(s) G proteins and mediates activation of adenylate cyclase activity. May also act as a receptor for the glycosphingolipid psychosine (PSY) and several related glycosphingolipids. Plays a role in immune response by maintaining lysosome function and regulating T-cell metabolism. Acts as a regulator of inflammation by mediating pH-sensing of extracellular acidification which takes place in inflamed tissues: activation regulates endo-lysosomal function of immune cells and T-cell metabolism. Constitutively active in endosomes and stimulates adenylate cyclase production from endosomes independently from extracellular pH changes. The sequence is that of G-protein coupled receptor 65 from Homo sapiens (Human).